We begin with the raw amino-acid sequence, 74 residues long: Guanine nucleotide-binding protein G(T) subunit gamma-T1 (74 aa).

A Cysteine methyl ester modification is found at Cys71. Cys71 carries S-farnesyl cysteine lipidation. Residues 72-74 (VIS) constitute a propeptide, removed in mature form.

It belongs to the G protein gamma family. G proteins are composed of 3 units, alpha, beta and gamma. Retinal rod outer segment.

The protein localises to the cell membrane. Its function is as follows. Guanine nucleotide-binding proteins (G proteins) are involved as a modulator or transducer in various transmembrane signaling systems. The beta and gamma chains are required for the GTPase activity, for replacement of GDP by GTP, and for G protein-effector interaction. The sequence is that of Guanine nucleotide-binding protein G(T) subunit gamma-T1 (Gngt1) from Mus musculus (Mouse).